The chain runs to 379 residues: UPF0754 protein BpOF4_11355 (379 aa).

The next 2 helical transmembrane spans lie at 6–26 and 359–379; these read FIGF…SLAI and LGAL…LFIG.

Belongs to the UPF0754 family.

It is found in the cell membrane. The sequence is that of UPF0754 protein BpOF4_11355 from Alkalihalophilus pseudofirmus (strain ATCC BAA-2126 / JCM 17055 / OF4) (Bacillus pseudofirmus).